A 158-amino-acid polypeptide reads, in one-letter code: Cyclic pyranopterin monophosphate synthase (158 aa).

Residues 75–77 (LCH) and 113–114 (ME) each bind substrate. Aspartate 128 is a catalytic residue.

This sequence belongs to the MoaC family. In terms of assembly, homohexamer; trimer of dimers.

It catalyses the reaction (8S)-3',8-cyclo-7,8-dihydroguanosine 5'-triphosphate = cyclic pyranopterin phosphate + diphosphate. The protein operates within cofactor biosynthesis; molybdopterin biosynthesis. Its function is as follows. Catalyzes the conversion of (8S)-3',8-cyclo-7,8-dihydroguanosine 5'-triphosphate to cyclic pyranopterin monophosphate (cPMP). The sequence is that of Cyclic pyranopterin monophosphate synthase from Roseiflexus sp. (strain RS-1).